The sequence spans 316 residues: Phosphoribosylaminoimidazole-succinocarboxamide synthase (316 aa).

Belongs to the SAICAR synthetase family.

It carries out the reaction 5-amino-1-(5-phospho-D-ribosyl)imidazole-4-carboxylate + L-aspartate + ATP = (2S)-2-[5-amino-1-(5-phospho-beta-D-ribosyl)imidazole-4-carboxamido]succinate + ADP + phosphate + 2 H(+). Its pathway is purine metabolism; IMP biosynthesis via de novo pathway; 5-amino-1-(5-phospho-D-ribosyl)imidazole-4-carboxamide from 5-amino-1-(5-phospho-D-ribosyl)imidazole-4-carboxylate: step 1/2. The protein is Phosphoribosylaminoimidazole-succinocarboxamide synthase of Flavobacterium psychrophilum (strain ATCC 49511 / DSM 21280 / CIP 103535 / JIP02/86).